The sequence spans 558 residues: Asparagine--tRNA ligase, cytoplasmic (558 aa).

At Ser-71 the chain carries Phosphoserine. A disordered region spans residues 79 to 101 (MWHREQMKSESREKKEAEDSLRR). The segment covering 81–101 (HREQMKSESREKKEAEDSLRR) has biased composition (basic and acidic residues). Lys-254 and Lys-500 each carry N6-acetyllysine.

Belongs to the class-II aminoacyl-tRNA synthetase family. Homodimer.

It is found in the cytoplasm. The enzyme catalyses tRNA(Asn) + L-asparagine + ATP = L-asparaginyl-tRNA(Asn) + AMP + diphosphate + H(+). In terms of biological role, catalyzes the attachment of asparagine to tRNA(Asn) in a two-step reaction: asparagine is first activated by ATP to form Asn-AMP and then transferred to the acceptor end of tRNA(Asn). In addition to its essential role in protein synthesis, acts as a signaling molecule that induced migration of CCR3-expressing cells. Has an essential role in the development of the cerebral cortex, being required for proper proliferation of radial glial cells. The sequence is that of Asparagine--tRNA ligase, cytoplasmic from Macaca fascicularis (Crab-eating macaque).